The primary structure comprises 318 residues: NADH-ubiquinone oxidoreductase chain 1 (318 aa).

8 helical membrane-spanning segments follow: residues Ile5–Ile25, Ser69–Ile89, Leu102–Gly122, Leu148–Ile168, Ile174–Glu194, Val215–Phe235, Leu253–Val273, and Phe293–Val313.

Belongs to the complex I subunit 1 family.

The protein resides in the mitochondrion inner membrane. It catalyses the reaction a ubiquinone + NADH + 5 H(+)(in) = a ubiquinol + NAD(+) + 4 H(+)(out). Its function is as follows. Core subunit of the mitochondrial membrane respiratory chain NADH dehydrogenase (Complex I) that is believed to belong to the minimal assembly required for catalysis. Complex I functions in the transfer of electrons from NADH to the respiratory chain. The immediate electron acceptor for the enzyme is believed to be ubiquinone. The sequence is that of NADH-ubiquinone oxidoreductase chain 1 (MT-ND1) from Myxine glutinosa (Atlantic hagfish).